The sequence spans 150 residues: D-aminoacyl-tRNA deacylase (150 aa).

A Gly-cisPro motif, important for rejection of L-amino acids motif is present at residues 136-137 (GP).

This sequence belongs to the DTD family. As to quaternary structure, homodimer.

The protein resides in the cytoplasm. It carries out the reaction glycyl-tRNA(Ala) + H2O = tRNA(Ala) + glycine + H(+). It catalyses the reaction a D-aminoacyl-tRNA + H2O = a tRNA + a D-alpha-amino acid + H(+). In terms of biological role, an aminoacyl-tRNA editing enzyme that deacylates mischarged D-aminoacyl-tRNAs. Also deacylates mischarged glycyl-tRNA(Ala), protecting cells against glycine mischarging by AlaRS. Acts via tRNA-based rather than protein-based catalysis; rejects L-amino acids rather than detecting D-amino acids in the active site. By recycling D-aminoacyl-tRNA to D-amino acids and free tRNA molecules, this enzyme counteracts the toxicity associated with the formation of D-aminoacyl-tRNA entities in vivo and helps enforce protein L-homochirality. This chain is D-aminoacyl-tRNA deacylase, found in Staphylococcus haemolyticus (strain JCSC1435).